A 401-amino-acid chain; its full sequence is Methyltransferase cfoC (401 aa).

Position 268 (aspartate 268) interacts with S-adenosyl-L-methionine. Histidine 308 (proton acceptor) is an active-site residue.

It belongs to the class I-like SAM-binding methyltransferase superfamily. Cation-independent O-methyltransferase family.

It participates in secondary metabolite biosynthesis; flavonoid biosynthesis. Functionally, methyltransferase; part of the gene cluster that mediates the biosynthesis of chlorflavonin, a fungal flavonoid with acetolactate synthase inhibitory activity. Within the pathway, cfoC is responsible for the methylation at position C8-OH of flavonoid. The pathway begins with the PKS-NRPS hybrid synthetase cfoA that uses benzoic acid or p-hydroxybenzoic acid as a starter unit with four rounds of chain elongation using malonyl-CoA to form the chalcone skeleton. Then, a new type of chalcone isomerase, cfoK, catalyzes the conversion of the chalcone into a flavanone by a histidine-mediated oxa-Michael addition mechanism. The desaturation of flavanone to flavone is catalyzed by a new type of flavone synthase, the flavin mononucleotide (FMN)-dependent oxidoreductase cfoJ. Monooxygenases cfoF, cfoG, and P450 cfoH are responsible for the hydroxylation of the flavonoid skeleton at sites C3, C8, and C2', respectively. Like cfoF, the dehydratase cfoI also plays a role in the hydroxylation of position C3. Methyltransferases cfoB, cfoC, and cfoD then catalyze the methylation of C7-OH, C8-OH, and C3-OH, respectively. Finally, the monooxygenase cfoE is responsible for the chlorination of flavonoid at position C3'. This is Methyltransferase cfoC from Aspergillus candidus.